The chain runs to 885 residues: Chitin synthase 3 (885 aa).

The segment at 1–59 (MASQYPGHQLDDIPSTNVYRPPPRHEDDEAEHALLHQNSAYQSQYDDPHSRPLTPGQES) is disordered. The segment covering 23–34 (PRHEDDEAEHAL) has biased composition (basic and acidic residues). The segment covering 36-45 (HQNSAYQSQY) has biased composition (polar residues). 6 helical membrane passes run 565–585 (FFLHIQMIYNIVSVLLSWFSL), 620–640 (IINTILQYLYLAFLLLQFILA), 650–670 (VAYIISFCLFGLIQLYVIVLS), 707–727 (IVIIALAATFGLYFVASFLYM), 735–755 (SFAQYLLLMPSFINILMIYAF), and 837–857 (LVATWIFSNALLAVAITSDSL).

It belongs to the chitin synthase family. Class III subfamily.

The protein localises to the cell membrane. The catalysed reaction is [(1-&gt;4)-N-acetyl-beta-D-glucosaminyl](n) + UDP-N-acetyl-alpha-D-glucosamine = [(1-&gt;4)-N-acetyl-beta-D-glucosaminyl](n+1) + UDP + H(+). Its function is as follows. Polymerizes chitin, a structural polymer of the cell wall and septum, by transferring the sugar moiety of UDP-GlcNAc to the non-reducing end of the growing chitin polymer. Is not only stable at different pH, but is also able to tolerate a broad temperature range. With CHS2, plays an important role in virulence. The protein is Chitin synthase 3 of Exophiala dermatitidis (Black yeast-like fungus).